The following is a 138-amino-acid chain: Endoribonuclease YbeY (138 aa).

Zn(2+)-binding residues include H106, H110, and D116.

It belongs to the endoribonuclease YbeY family. Zn(2+) is required as a cofactor.

The protein localises to the cytoplasm. Single strand-specific metallo-endoribonuclease involved in late-stage 70S ribosome quality control and in maturation of the 3' terminus of the 16S rRNA. The polypeptide is Endoribonuclease YbeY (Phocaeicola vulgatus (strain ATCC 8482 / DSM 1447 / JCM 5826 / CCUG 4940 / NBRC 14291 / NCTC 11154) (Bacteroides vulgatus)).